We begin with the raw amino-acid sequence, 427 residues long: 3-phosphoshikimate 1-carboxyvinyltransferase (427 aa).

3-phosphoshikimate contacts are provided by Lys-22, Ser-23, and Arg-27. A phosphoenolpyruvate-binding site is contributed by Lys-22. Residues Gly-96 and Arg-124 each coordinate phosphoenolpyruvate. 3-phosphoshikimate-binding residues include Ser-169, Ser-170, Gln-171, Ser-197, Asp-313, Asn-336, and Lys-340. Gln-171 provides a ligand contact to phosphoenolpyruvate. The Proton acceptor role is filled by Asp-313. Phosphoenolpyruvate contacts are provided by Arg-344, Arg-386, and Lys-411.

This sequence belongs to the EPSP synthase family. In terms of assembly, monomer.

It localises to the cytoplasm. The catalysed reaction is 3-phosphoshikimate + phosphoenolpyruvate = 5-O-(1-carboxyvinyl)-3-phosphoshikimate + phosphate. The protein operates within metabolic intermediate biosynthesis; chorismate biosynthesis; chorismate from D-erythrose 4-phosphate and phosphoenolpyruvate: step 6/7. Catalyzes the transfer of the enolpyruvyl moiety of phosphoenolpyruvate (PEP) to the 5-hydroxyl of shikimate-3-phosphate (S3P) to produce enolpyruvyl shikimate-3-phosphate and inorganic phosphate. This is 3-phosphoshikimate 1-carboxyvinyltransferase from Escherichia coli O6:H1 (strain CFT073 / ATCC 700928 / UPEC).